The chain runs to 749 residues: Small G protein signaling modulator 3 (749 aa).

The region spanning 114–305 (GIPHGMRPQL…RIWDLFFYEG (192 aa)) is the Rab-GAP TBC domain. Phosphoserine is present on Ser406. A coiled-coil region spans residues 415 to 439 (EDDLEALKAKNIKQTELVADLREAI). The SH3 domain occupies 480–539 (SHRRRAKALLDFERHDDDELGFRKNDIITIVSQKDEHCWVGELNGLRGWFPAKFVEVLDE). Residues 555 to 718 (GVTDLVRGTL…FAFSLSQDWE (164 aa)) enclose the RUN domain.

This sequence belongs to the small G protein signaling modulator family. Interacts with GJA1. Interaction with GJA1 induces its degradation. Interacts via its RUN domain with the C-terminal region of NF2. Interacts with RAB3A, RAB4A, RAB5A, RAB8A, RAB11A, RAP1A, RAP1B, RAP2A, RAP2B and PDCD6IP. No interaction with RAB27A. Widely expressed.

The protein localises to the cytoplasm. Functionally, may play a cooperative role in NF2-mediated growth suppression of cells. This is Small G protein signaling modulator 3 from Homo sapiens (Human).